The following is a 115-amino-acid chain: Protein Rev (115 aa).

A phosphoserine; by host CK2 mark is found at Ser5 and Ser8. Positions 18-26 are homomultimerization; it reads LIKFLYQSN. The segment at 23–48 is disordered; sequence YQSNPPPSSEGTRQARRNRRRRWRER. The Nuclear localization signal and RNA-binding (RRE) signature appears at 34 to 50; the sequence is TRQARRNRRRRWRERQR. The span at 36–48 shows a compositional bias: basic residues; it reads QARRNRRRRWRER. The Nuclear export signal and binding to XPO1 motif lies at 73–83; that stretch reads LQLPPQRLTLD. The segment at 89–115 is disordered; it reads GTSGTQGVGSPQILVESPTVLESGTKE. Residues Ser91 and Ser98 each carry the phosphoserine; by host modification.

This sequence belongs to the HIV-1 REV protein family. Homomultimer; when bound to the RRE. Multimeric assembly is essential for activity and may involve XPO1. Binds to human KPNB1, XPO1, TNPO1, RANBP5 and IPO7. Interacts with the viral Integrase. Interacts with human KHDRBS1. Interacts with human NAP1; this interaction decreases Rev multimerization and stimulates its activity. Interacts with human DEAD-box helicases DDX3 and DDX24; these interactions may serve for viral RNA export to the cytoplasm and packaging, respectively. Interacts with human PSIP1; this interaction may inhibit HIV-1 DNA integration by promoting dissociation of the Integrase-LEDGF/p75 complex. In terms of processing, asymmetrically arginine dimethylated at one site by host PRMT6. Methylation impairs the RNA-binding activity and export of viral RNA from the nucleus to the cytoplasm. Post-translationally, phosphorylated by protein kinase CK2. Presence of, and maybe binding to the N-terminus of the regulatory beta subunit of CK2 is necessary for CK2-mediated Rev's phosphorylation.

The protein resides in the host nucleus. Its subcellular location is the host nucleolus. It is found in the host cytoplasm. Functionally, escorts unspliced or incompletely spliced viral pre-mRNAs (late transcripts) out of the nucleus of infected cells. These pre-mRNAs carry a recognition sequence called Rev responsive element (RRE) located in the env gene, that is not present in fully spliced viral mRNAs (early transcripts). This function is essential since most viral proteins are translated from unspliced or partially spliced pre-mRNAs which cannot exit the nucleus by the pathway used by fully processed cellular mRNAs. Rev itself is translated from a fully spliced mRNA that readily exits the nucleus. Rev's nuclear localization signal (NLS) binds directly to KPNB1/Importin beta-1 without previous binding to KPNA1/Importin alpha-1. KPNB1 binds to the GDP bound form of RAN (Ran-GDP) and targets Rev to the nucleus. In the nucleus, the conversion from Ran-GDP to Ran-GTP dissociates Rev from KPNB1 and allows Rev's binding to the RRE in viral pre-mRNAs. Rev multimerization on the RRE via cooperative assembly exposes its nuclear export signal (NES) to the surface. Rev can then form a complex with XPO1/CRM1 and Ran-GTP, leading to nuclear export of the complex. Conversion from Ran-GTP to Ran-GDP mediates dissociation of the Rev/RRE/XPO1/RAN complex, so that Rev can return to the nucleus for a subsequent round of export. Beside KPNB1, also seems to interact with TNPO1/Transportin-1, RANBP5/IPO5 and IPO7/RANBP7 for nuclear import. The nucleoporin-like HRB/RIP is an essential cofactor that probably indirectly interacts with Rev to release HIV RNAs from the perinuclear region to the cytoplasm. The protein is Protein Rev of Human immunodeficiency virus type 1 group M subtype B (isolate MN) (HIV-1).